The chain runs to 427 residues: Histidinol dehydrogenase (427 aa).

NAD(+)-binding residues include Tyr-123, Gln-185, and Asn-208. Substrate is bound by residues Ser-231, Gln-253, and His-256. Zn(2+) contacts are provided by Gln-253 and His-256. Residues Glu-321 and His-322 each act as proton acceptor in the active site. His-322, Asp-355, Glu-409, and His-414 together coordinate substrate. Asp-355 contributes to the Zn(2+) binding site. Zn(2+) is bound at residue His-414.

This sequence belongs to the histidinol dehydrogenase family. The cofactor is Zn(2+).

It carries out the reaction L-histidinol + 2 NAD(+) + H2O = L-histidine + 2 NADH + 3 H(+). It participates in amino-acid biosynthesis; L-histidine biosynthesis; L-histidine from 5-phospho-alpha-D-ribose 1-diphosphate: step 9/9. Functionally, catalyzes the sequential NAD-dependent oxidations of L-histidinol to L-histidinaldehyde and then to L-histidine. The protein is Histidinol dehydrogenase (hisD) of Bacillus subtilis (strain 168).